Here is a 438-residue protein sequence, read N- to C-terminus: Arginine deiminase-like protein (438 aa).

Belongs to the arginine deiminase family.

This chain is Arginine deiminase-like protein, found in Mycoplasma pneumoniae (strain ATCC 29342 / M129 / Subtype 1) (Mycoplasmoides pneumoniae).